The following is a 78-amino-acid chain: Large ribosomal subunit protein uL29 (78 aa).

The protein belongs to the universal ribosomal protein uL29 family.

The protein is Large ribosomal subunit protein uL29 of Salinispora arenicola (strain CNS-205).